Reading from the N-terminus, the 204-residue chain is MKRFGIIGGTFDPIHNAHLYIAYEAKEKLSLDEVIFMPAGIQPLKANNIITDPGLRYSMVKAAIEHFSEFSVSDYEIEKGGLSFTHETLEYFKNKISDRDKDNELFFITGADCLFSMEKWKEVKKIFSLATLVVFSRGGINKSDMINRKHMIEEKYNGKIIVLDLKELEISSTDIRNRVHENKRIDFFVPERVSDIIYKNRLYR.

The protein belongs to the NadD family.

The enzyme catalyses nicotinate beta-D-ribonucleotide + ATP + H(+) = deamido-NAD(+) + diphosphate. The protein operates within cofactor biosynthesis; NAD(+) biosynthesis; deamido-NAD(+) from nicotinate D-ribonucleotide: step 1/1. Its function is as follows. Catalyzes the reversible adenylation of nicotinate mononucleotide (NaMN) to nicotinic acid adenine dinucleotide (NaAD). In Clostridium beijerinckii (strain ATCC 51743 / NCIMB 8052) (Clostridium acetobutylicum), this protein is Probable nicotinate-nucleotide adenylyltransferase.